The primary structure comprises 190 residues: Recombination protein RecR (190 aa).

The C4-type zinc finger occupies 58–73 (CTQCGGLSEDELCYIC). One can recognise a Toprim domain in the interval 81 to 167 (SSLCLVESAR…HFTKIAQGVP (87 aa)).

The protein belongs to the RecR family.

Its function is as follows. May play a role in DNA repair. It seems to be involved in an RecBC-independent recombinational process of DNA repair. It may act with RecF and RecO. This chain is Recombination protein RecR, found in Nitratiruptor sp. (strain SB155-2).